The following is a 302-amino-acid chain: Adipolin (302 aa).

A signal peptide spans 1–20 (MRRWAWAAVVVLLGPQLVLL). Disordered regions lie at residues 28-68 (EAQR…GPEF) and 86-110 (ALRK…PPGA). The N-linked (GlcNAc...) asparagine glycan is linked to Asn43. Over residues 86-100 (ALRKRCGSRDKKPRD) the composition is skewed to basic and acidic residues. The region spanning 147-302 (LRLVGEAFHC…SSFSGLLLGT (156 aa)) is the C1q domain.

Belongs to the adipolin/erythroferrone family. In terms of assembly, homomultimer; disulfide-linked. May interact with ERFE. In terms of processing, processed into Adipolin fC1QTNF12 and Adipolin gC1QTNF12 by FURIN. Insulin enhances endogenous C1QTNF12 cleavage. Predominantly expressed by adipose tissues.

The protein resides in the secreted. Insulin-sensitizing adipocyte-secreted protein (adipokine) that regulates glucose metabolism in liver and adipose tissue. Promotes glucose uptake in adipocytes and suppresses de novo glucose production in hepatocytes via the PI3K-Akt signaling pathway. Administration lead to reduction of blood glucose. Able to attenuate inflammation in fat tissue. The polypeptide is Adipolin (Homo sapiens (Human)).